Consider the following 289-residue polypeptide: Transmembrane protein 163 (289 aa).

The tract at residues 1–65 (MEPAAGIQRR…ESGQFSDGLE (65 aa)) is disordered. Over 1 to 88 (MEPAAGIQRR…HEAQNYRKKA (88 aa)) the chain is Cytoplasmic. At Ser-11 the chain carries Phosphoserine. The span at 16-36 (TVPPPPRGHAPPAAAPGPAPL) shows a compositional bias: pro residues. Residues 42-72 (EPPQLEEERQVRISESGQFSDGLEDRGLLES) form a required for interaction with MCOLN1 region. 3 positions are modified to phosphoserine: Ser-55, Ser-57, and Ser-61. The chain crosses the membrane as a helical span at residues 89–109 (LWVSWFSIIVTLALAVAAFTV). At 110 to 116 (SVMRYSA) the chain is on the extracellular side. Residues 117 to 137 (SAFGFAFDAILDVLSSAIVLW) traverse the membrane as a helical segment. The Cytoplasmic segment spans residues 138 to 150 (RYSNAAAVHSAHR). A helical transmembrane segment spans residues 151–171 (EYIACVILGVIFLLSSICIVV). The Extracellular portion of the chain corresponds to 172–187 (KAIHDLSTRLLPEVDD). A helical membrane pass occupies residues 188-208 (FLFSVSILSGILCSILAVLKF). The Cytoplasmic segment spans residues 209–217 (MLGKVLTSR). Residues 218–238 (ALITDGFNSLVGGVMGFSILL) traverse the membrane as a helical segment. Over 239 to 255 (SAEVFKHDSAVWYLDGS) the chain is Extracellular. A helical membrane pass occupies residues 256-276 (IGVLIGLTIFAYGVKLLIDMV). Residues 277-289 (PRVRQTRHYEMFE) lie on the Cytoplasmic side of the membrane.

It belongs to the TMEM163 family. As to quaternary structure, homodimer. Interacts with MCOLN1/TRPML1. Interacts with SLC30A1, SLC30A2, SLC30A3 and SLC30A4. Widely expressed. High expression is detected in brain, lung and testis.

Its subcellular location is the cytoplasmic vesicle. The protein localises to the secretory vesicle. It localises to the synaptic vesicle membrane. It is found in the early endosome membrane. The protein resides in the late endosome membrane. Its subcellular location is the lysosome membrane. The protein localises to the cell membrane. The enzyme catalyses Zn(2+)(in) = Zn(2+)(out). Zinc ion transporter that mediates zinc efflux and plays a crucial role in intracellular zinc homeostasis. Binds the divalent cations Zn(2+), Ni(2+), and to a minor extent Cu(2+). Is a functional modulator of P2X purinoceptors, including P2RX1, P2RX3, P2RX4 and P2RX7. Plays a role in central nervous system development and is required for myelination, and survival and proliferation of oligodendrocytes. This is Transmembrane protein 163 (TMEM163) from Homo sapiens (Human).